Here is a 162-residue protein sequence, read N- to C-terminus: Large ribosomal subunit protein uL15 (162 aa).

The span at 1–10 shows a compositional bias: basic and acidic residues; that stretch reads MNLNELRDNA. Positions 1–39 are disordered; the sequence is MNLNELRDNAGSRYRKKRLGRGIGSGKGKTSGKGVKGQK. A compositionally biased stretch (gly residues) spans 21–35; that stretch reads RGIGSGKGKTSGKGV.

It belongs to the universal ribosomal protein uL15 family. As to quaternary structure, part of the 50S ribosomal subunit.

Binds to the 23S rRNA. The sequence is that of Large ribosomal subunit protein uL15 from Gluconacetobacter diazotrophicus (strain ATCC 49037 / DSM 5601 / CCUG 37298 / CIP 103539 / LMG 7603 / PAl5).